A 643-amino-acid chain; its full sequence is Lysophospholipase ARB_05919 (643 aa).

Positions 1–22 are cleaved as a signal peptide; sequence MMFIPATLGTFVLASLLPATVG. One can recognise a PLA2c domain in the interval 50-597; it reads DCPSTKPAVR…KMYCWDGTLN (548 aa). N-linked (GlcNAc...) asparagine glycosylation is found at Asn-142, Asn-176, Asn-195, Asn-293, Asn-466, Asn-472, Asn-482, Asn-503, Asn-524, Asn-533, Asn-552, and Asn-597.

Belongs to the lysophospholipase family.

It is found in the secreted. The enzyme catalyses a 1-acyl-sn-glycero-3-phosphocholine + H2O = sn-glycerol 3-phosphocholine + a fatty acid + H(+). Functionally, catalyzes the release of fatty acids from lysophospholipids. Phospholipase B may well contribute to pathogenicity by abetting the fungus in damaging host cell membranes. The polypeptide is Lysophospholipase ARB_05919 (Arthroderma benhamiae (strain ATCC MYA-4681 / CBS 112371) (Trichophyton mentagrophytes)).